A 238-amino-acid polypeptide reads, in one-letter code: Serine protease SplA (238 aa).

An N-terminal signal peptide occupies residues 1 to 38; the sequence is MNKNVMVKGLTALTILTILTSLGFAENISNQPHSIAKA. Catalysis depends on charge relay system residues histidine 77, aspartate 116, and serine 192.

It belongs to the peptidase S1B family.

The protein resides in the secreted. This is Serine protease SplA (splA) from Staphylococcus aureus (strain COL).